A 111-amino-acid polypeptide reads, in one-letter code: Iron-sulfur cluster assembly protein CyaY (111 aa).

The protein belongs to the frataxin family.

In terms of biological role, involved in iron-sulfur (Fe-S) cluster assembly. May act as a regulator of Fe-S biogenesis. The chain is Iron-sulfur cluster assembly protein CyaY from Cupriavidus metallidurans (strain ATCC 43123 / DSM 2839 / NBRC 102507 / CH34) (Ralstonia metallidurans).